The chain runs to 332 residues: Lipoyl synthase (332 aa).

Residues C79, C84, C90, C105, C109, C112, and S319 each contribute to the [4Fe-4S] cluster site. Residues 91–308 (FSHGTATFMI…ADYGYEIGFK (218 aa)) form the Radical SAM core domain.

Belongs to the radical SAM superfamily. Lipoyl synthase family. [4Fe-4S] cluster is required as a cofactor.

It localises to the cytoplasm. It carries out the reaction [[Fe-S] cluster scaffold protein carrying a second [4Fe-4S](2+) cluster] + N(6)-octanoyl-L-lysyl-[protein] + 2 oxidized [2Fe-2S]-[ferredoxin] + 2 S-adenosyl-L-methionine + 4 H(+) = [[Fe-S] cluster scaffold protein] + N(6)-[(R)-dihydrolipoyl]-L-lysyl-[protein] + 4 Fe(3+) + 2 hydrogen sulfide + 2 5'-deoxyadenosine + 2 L-methionine + 2 reduced [2Fe-2S]-[ferredoxin]. Its pathway is protein modification; protein lipoylation via endogenous pathway; protein N(6)-(lipoyl)lysine from octanoyl-[acyl-carrier-protein]: step 2/2. Its function is as follows. Catalyzes the radical-mediated insertion of two sulfur atoms into the C-6 and C-8 positions of the octanoyl moiety bound to the lipoyl domains of lipoate-dependent enzymes, thereby converting the octanoylated domains into lipoylated derivatives. The polypeptide is Lipoyl synthase (Hahella chejuensis (strain KCTC 2396)).